A 20-amino-acid chain; its full sequence is Brevinin-1SPb (20 aa).

The cysteines at positions 14 and 20 are disulfide-linked.

In terms of tissue distribution, expressed by the skin glands.

The protein localises to the secreted. Its function is as follows. Antimicrobial peptide with activity against Gram-negative and Gram-positive bacteria (MIC=50 uM against E.coli, MIC=6 uM against S.aureus) and fungi (MIC=13 uM against C.albicans). Shows hemolytic activity on human erythrocytes (HC(50)=25 uM). In Lithobates septentrionalis (Mink frog), this protein is Brevinin-1SPb.